The sequence spans 288 residues: 4-hydroxy-tetrahydrodipicolinate synthase (288 aa).

Thr-47 provides a ligand contact to pyruvate. Tyr-136 serves as the catalytic Proton donor/acceptor. Lys-164 (schiff-base intermediate with substrate) is an active-site residue. Ile-204 serves as a coordination point for pyruvate.

This sequence belongs to the DapA family. In terms of assembly, homotetramer; dimer of dimers.

Its subcellular location is the cytoplasm. The catalysed reaction is L-aspartate 4-semialdehyde + pyruvate = (2S,4S)-4-hydroxy-2,3,4,5-tetrahydrodipicolinate + H2O + H(+). The protein operates within amino-acid biosynthesis; L-lysine biosynthesis via DAP pathway; (S)-tetrahydrodipicolinate from L-aspartate: step 3/4. In terms of biological role, catalyzes the condensation of (S)-aspartate-beta-semialdehyde [(S)-ASA] and pyruvate to 4-hydroxy-tetrahydrodipicolinate (HTPA). The protein is 4-hydroxy-tetrahydrodipicolinate synthase of Leuconostoc mesenteroides subsp. mesenteroides (strain ATCC 8293 / DSM 20343 / BCRC 11652 / CCM 1803 / JCM 6124 / NCDO 523 / NBRC 100496 / NCIMB 8023 / NCTC 12954 / NRRL B-1118 / 37Y).